The chain runs to 657 residues: UvrABC system protein B (657 aa).

One can recognise a Helicase ATP-binding domain in the interval 29 to 416; the sequence is KLAEFQTNEQ…LSHNNVVEQL (388 aa). ATP is bound at residue 42–49; that stretch reads GATGTGKT. The short motif at 95–118 is the Beta-hairpin element; it reads YFDFYQPEAYLPAKGVYIEKSATV. Residues 435 to 597 form the Helicase C-terminal domain; the sequence is QVEDLVSEII…KTPMTVQKPI (163 aa). One can recognise a UVR domain in the interval 615–650; the sequence is AALIKQLTKEMKQAAANQNYELAIEIRDSIFELEKQ.

It belongs to the UvrB family. Forms a heterotetramer with UvrA during the search for lesions. Interacts with UvrC in an incision complex.

The protein resides in the cytoplasm. In terms of biological role, the UvrABC repair system catalyzes the recognition and processing of DNA lesions. A damage recognition complex composed of 2 UvrA and 2 UvrB subunits scans DNA for abnormalities. Upon binding of the UvrA(2)B(2) complex to a putative damaged site, the DNA wraps around one UvrB monomer. DNA wrap is dependent on ATP binding by UvrB and probably causes local melting of the DNA helix, facilitating insertion of UvrB beta-hairpin between the DNA strands. Then UvrB probes one DNA strand for the presence of a lesion. If a lesion is found the UvrA subunits dissociate and the UvrB-DNA preincision complex is formed. This complex is subsequently bound by UvrC and the second UvrB is released. If no lesion is found, the DNA wraps around the other UvrB subunit that will check the other stand for damage. In Mycoplasma pneumoniae (strain ATCC 29342 / M129 / Subtype 1) (Mycoplasmoides pneumoniae), this protein is UvrABC system protein B.